The sequence spans 448 residues: UDP-glycosyltransferase 79B5 (448 aa).

UDP-alpha-D-glucose contacts are provided by residues T261, 320 to 322 (LEQ), 337 to 345 (HCGFGSMWE), and 359 to 362 (LADQ).

It belongs to the UDP-glycosyltransferase family.

This is UDP-glycosyltransferase 79B5 (UGT79B5) from Arabidopsis thaliana (Mouse-ear cress).